Reading from the N-terminus, the 362-residue chain is 3-dehydroquinate synthase (362 aa).

Residues 72-77 (DGEAHK), 106-110 (GVIGD), 130-131 (TT), Lys-143, and Lys-152 each bind NAD(+). Residues Glu-185, His-248, and His-265 each contribute to the Zn(2+) site.

The protein belongs to the sugar phosphate cyclases superfamily. Dehydroquinate synthase family. It depends on Co(2+) as a cofactor. Zn(2+) is required as a cofactor. NAD(+) serves as cofactor.

The protein localises to the cytoplasm. The enzyme catalyses 7-phospho-2-dehydro-3-deoxy-D-arabino-heptonate = 3-dehydroquinate + phosphate. Its pathway is metabolic intermediate biosynthesis; chorismate biosynthesis; chorismate from D-erythrose 4-phosphate and phosphoenolpyruvate: step 2/7. Functionally, catalyzes the conversion of 3-deoxy-D-arabino-heptulosonate 7-phosphate (DAHP) to dehydroquinate (DHQ). The polypeptide is 3-dehydroquinate synthase (Laribacter hongkongensis (strain HLHK9)).